The chain runs to 243 residues: Epoxyqueuosine reductase QueH (243 aa).

Residues 1–16 (MHRTKLEQKQPHFDAQ) are compositionally biased toward basic and acidic residues. The segment at 1-30 (MHRTKLEQKQPHFDAQKRRKKECKNSNTPF) is disordered. [4Fe-4S] cluster contacts are provided by C49, C50, C128, and C131. C211 and C213 form a disulfide bridge.

It belongs to the QueH family.

The catalysed reaction is epoxyqueuosine(34) in tRNA + AH2 = queuosine(34) in tRNA + A + H2O. The protein operates within tRNA modification; tRNA-queuosine biosynthesis. In terms of biological role, catalyzes the conversion of epoxyqueuosine (oQ) to queuosine (Q), which is a hypermodified base found in the wobble positions of tRNA(Asp), tRNA(Asn), tRNA(His) and tRNA(Tyr). In Histophilus somni (strain 129Pt) (Haemophilus somnus), this protein is Epoxyqueuosine reductase QueH.